A 115-amino-acid chain; its full sequence is NAD(P)H-quinone oxidoreductase subunit M (115 aa).

This sequence belongs to the complex I NdhM subunit family. As to quaternary structure, NDH-1 can be composed of about 15 different subunits; different subcomplexes with different compositions have been identified which probably have different functions.

It localises to the cellular thylakoid membrane. The catalysed reaction is a plastoquinone + NADH + (n+1) H(+)(in) = a plastoquinol + NAD(+) + n H(+)(out). It carries out the reaction a plastoquinone + NADPH + (n+1) H(+)(in) = a plastoquinol + NADP(+) + n H(+)(out). Functionally, NDH-1 shuttles electrons from an unknown electron donor, via FMN and iron-sulfur (Fe-S) centers, to quinones in the respiratory and/or the photosynthetic chain. The immediate electron acceptor for the enzyme in this species is believed to be plastoquinone. Couples the redox reaction to proton translocation, and thus conserves the redox energy in a proton gradient. Cyanobacterial NDH-1 also plays a role in inorganic carbon-concentration. This Prochlorococcus marinus (strain NATL2A) protein is NAD(P)H-quinone oxidoreductase subunit M.